Consider the following 154-residue polypeptide: MKILVLNGPNLNLLGIREPEIYGKVSLEEIEKDLTGFAENQGVEIIFYQKNGEGELIDLIHRYYREIDGILINPGAYTHYSIALRDALLAVGKPAVEVHLSNLYKREEFRQHSVTAGACIGYIAGFGVDSYRLGLIALIDYLKRRDNDGASGKA.

Tyrosine 22 serves as the catalytic Proton acceptor. Positions 73, 79, and 86 each coordinate substrate. Histidine 99 (proton donor) is an active-site residue. Substrate-binding positions include 100 to 101 (LS) and arginine 110.

The protein belongs to the type-II 3-dehydroquinase family. As to quaternary structure, homododecamer.

It catalyses the reaction 3-dehydroquinate = 3-dehydroshikimate + H2O. It participates in metabolic intermediate biosynthesis; chorismate biosynthesis; chorismate from D-erythrose 4-phosphate and phosphoenolpyruvate: step 3/7. Catalyzes a trans-dehydration via an enolate intermediate. The polypeptide is 3-dehydroquinate dehydratase (Carboxydothermus hydrogenoformans (strain ATCC BAA-161 / DSM 6008 / Z-2901)).